The following is a 67-amino-acid chain: Large ribosomal subunit protein uL29 (67 aa).

It belongs to the universal ribosomal protein uL29 family.

The protein is Large ribosomal subunit protein uL29 of Wolbachia sp. subsp. Drosophila simulans (strain wRi).